Consider the following 143-residue polypeptide: Large ribosomal subunit protein uL11 (143 aa).

This sequence belongs to the universal ribosomal protein uL11 family. In terms of assembly, part of the ribosomal stalk of the 50S ribosomal subunit. Interacts with L10 and the large rRNA to form the base of the stalk. L10 forms an elongated spine to which L12 dimers bind in a sequential fashion forming a multimeric L10(L12)X complex. In terms of processing, one or more lysine residues are methylated.

Its function is as follows. Forms part of the ribosomal stalk which helps the ribosome interact with GTP-bound translation factors. This chain is Large ribosomal subunit protein uL11, found in Marinobacter nauticus (strain ATCC 700491 / DSM 11845 / VT8) (Marinobacter aquaeolei).